We begin with the raw amino-acid sequence, 132 residues long: UPF0299 membrane protein Ent638_2744 (132 aa).

A run of 4 helical transmembrane segments spans residues 8-28, 31-51, 63-83, and 93-113; these read VWQYLRAFILIYACLYAGIFI, LLPITIPGSIIGMLIMFLLLA, GCFVLIRYMALLFVPIGVGVM, and FGPIVVSCAISTLVVFLVVSW.

It belongs to the UPF0299 family.

It localises to the cell inner membrane. In Enterobacter sp. (strain 638), this protein is UPF0299 membrane protein Ent638_2744.